A 298-amino-acid chain; its full sequence is Multifunctional dioxygenase ausE (298 aa).

Residues R72 and Q127 each coordinate substrate. Fe cation is bound by residues H130 and D132. Residue T167 participates in substrate binding. H214 lines the Fe cation pocket. Residue R226 participates in substrate binding.

This sequence belongs to the PhyH family. Homodimer. Requires Fe cation as cofactor.

It catalyses the reaction preaustinoid A1 + 2-oxoglutarate + O2 = preaustinoid A2 + succinate + CO2 + H2O. It carries out the reaction preaustinoid A2 + 2-oxoglutarate + O2 = preaustinoid A3 + succinate + CO2 + H2O. The catalysed reaction is berkeleyone A + 2-oxoglutarate + O2 = preaustinoid A + succinate + CO2 + H2O. The protein operates within secondary metabolite biosynthesis; terpenoid biosynthesis. Multifunctional dioxygenase; part of the gene cluster that mediates the biosynthesis of calidodehydroaustin, a fungal meroterpenoid. The first step of the pathway is the synthesis of 3,5-dimethylorsellinic acid by the polyketide synthase ausA. 3,5-dimethylorsellinic acid is then prenylated by the polyprenyl transferase ausN. Further epoxidation by the FAD-dependent monooxygenase ausM and cyclization by the probable terpene cyclase ausL lead to the formation of protoaustinoid A. Protoaustinoid A is then oxidized to spiro-lactone preaustinoid A3 by the combined action of the FAD-binding monooxygenases ausB and ausC, and the dioxygenase ausE. Acid-catalyzed keto-rearrangement and ring contraction of the tetraketide portion of preaustinoid A3 by ausJ lead to the formation of preaustinoid A4. The aldo-keto reductase ausK, with the help of ausH, is involved in the next step by transforming preaustinoid A4 into isoaustinone which is in turn hydroxylated by the P450 monooxygenase ausI to form austinolide. The cytochrome P450 monooxygenase ausG modifies austinolide to austinol. Austinol is further acetylated to austin by the O-acetyltransferase ausP, which spontaneously changes to dehydroaustin. The cytochrome P450 monooxygenase ausR then converts dehydroaustin is into 7-dehydrodehydroaustin. The hydroxylation catalyzed by ausR permits the O-acetyltransferase ausQ to add an additional acetyl group to the molecule, leading to the formation of acetoxydehydroaustin. The short chain dehydrogenase ausT catalyzes the reduction of the double bond present between carbon atoms 1 and 2 to convert 7-dehydrodehydroaustin into 1,2-dihydro-7-hydroxydehydroaustin. AusQ catalyzes not only an acetylation reaction but also the addition of the PKS ausV diketide product to 1,2-dihydro-7-hydroxydehydroaustin, forming precalidodehydroaustin. Finally, the iron/alpha-ketoglutarate-dependent dioxygenase converts precalidodehydroaustin into calidodehydroaustin. The sequence is that of Multifunctional dioxygenase ausE from Aspergillus calidoustus.